Consider the following 64-residue polypeptide: Conotoxin Cal12.4 (64 aa).

The first 21 residues, 1–21, serve as a signal peptide directing secretion; the sequence is MKLTCMLVVLLLVLPFGDLIA.

This sequence belongs to the conotoxin O1 superfamily. Contains 4 disulfide bonds. As to expression, expressed by the venom duct.

The protein resides in the secreted. In terms of biological role, probable neurotoxin. The polypeptide is Conotoxin Cal12.4 (Californiconus californicus (California cone)).